The following is a 659-amino-acid chain: UvrABC system protein B (659 aa).

The Helicase ATP-binding domain maps to 25–412; sequence QSIENGNRGQ…SEIVAEQIIR (388 aa). ATP is bound at residue 38–45; sequence GVTGSGKT. The short motif at 91–114 is the Beta-hairpin element; it reads YYDYYQPEAYVPQTDTFIEKDASI. One can recognise a Helicase C-terminal domain in the interval 429 to 582; that stretch reads QIDDLYGEIQ…QMEYNEEHNI (154 aa). Positions 622-657 constitute a UVR domain; that stretch reads EKLIEQYEEEMKEAAKNLQFERAAELRDIIKDLKEN.

Belongs to the UvrB family. As to quaternary structure, forms a heterotetramer with UvrA during the search for lesions. Interacts with UvrC in an incision complex.

The protein localises to the cytoplasm. Functionally, the UvrABC repair system catalyzes the recognition and processing of DNA lesions. A damage recognition complex composed of 2 UvrA and 2 UvrB subunits scans DNA for abnormalities. Upon binding of the UvrA(2)B(2) complex to a putative damaged site, the DNA wraps around one UvrB monomer. DNA wrap is dependent on ATP binding by UvrB and probably causes local melting of the DNA helix, facilitating insertion of UvrB beta-hairpin between the DNA strands. Then UvrB probes one DNA strand for the presence of a lesion. If a lesion is found the UvrA subunits dissociate and the UvrB-DNA preincision complex is formed. This complex is subsequently bound by UvrC and the second UvrB is released. If no lesion is found, the DNA wraps around the other UvrB subunit that will check the other stand for damage. This chain is UvrABC system protein B, found in Clostridium perfringens (strain 13 / Type A).